Here is a 252-residue protein sequence, read N- to C-terminus: MEAVERIGRIIEPSVEAMGYELVRVQLSGGQRPTLQIMAERSDGAAMTVEDCADISRAVSALLDVEDPLPGAYTLEVSSPGIDRPLTRLKDFERFAGFEARLETKAPVDGRKRFRGFLAGIEDDAVRLALPVEKKARKGAKAAPTRDAADAGEAGDAEATLVVIPFGLVLKAKLELTDELLTAAAAEQGAAPGTEGGAMEVEEDARPARRPHQPKPKKAKKKGPGRFSKAGAGEDVDGADGGPAAGPGAQDE.

Residues Q188–E252 are disordered. A compositionally biased stretch (basic residues) spans A208–P224.

Belongs to the RimP family.

The protein resides in the cytoplasm. Functionally, required for maturation of 30S ribosomal subunits. This Rhodospirillum centenum (strain ATCC 51521 / SW) protein is Ribosome maturation factor RimP.